Consider the following 221-residue polypeptide: 2,3-bisphosphoglycerate-dependent phosphoglycerate mutase (221 aa).

Residues 8–15 (RHGNSLWN), 21–22 (TG), arginine 60, 87–90 (ERHY), lysine 98, 114–115 (RR), and 174–175 (GN) contribute to the substrate site. The active-site Tele-phosphohistidine intermediate is histidine 9. The Proton donor/acceptor role is filled by glutamate 87. Residues 114 to 140 (RRGYDTPPPPLHSQADDPRYEEPPPLS) form a disordered region.

The protein belongs to the phosphoglycerate mutase family. BPG-dependent PGAM subfamily.

The catalysed reaction is (2R)-2-phosphoglycerate = (2R)-3-phosphoglycerate. It participates in carbohydrate degradation; glycolysis; pyruvate from D-glyceraldehyde 3-phosphate: step 3/5. Its function is as follows. Catalyzes the interconversion of 2-phosphoglycerate and 3-phosphoglycerate. The polypeptide is 2,3-bisphosphoglycerate-dependent phosphoglycerate mutase (Tropheryma whipplei (strain TW08/27) (Whipple's bacillus)).